The primary structure comprises 96 residues: Co-chaperonin GroES (96 aa).

This sequence belongs to the GroES chaperonin family. Heptamer of 7 subunits arranged in a ring. Interacts with the chaperonin GroEL.

The protein localises to the cytoplasm. Its function is as follows. Together with the chaperonin GroEL, plays an essential role in assisting protein folding. The GroEL-GroES system forms a nano-cage that allows encapsulation of the non-native substrate proteins and provides a physical environment optimized to promote and accelerate protein folding. GroES binds to the apical surface of the GroEL ring, thereby capping the opening of the GroEL channel. This chain is Co-chaperonin GroES, found in Myxococcus xanthus (strain DK1622).